Consider the following 505-residue polypeptide: Apolipoprotein N-acyltransferase (505 aa).

6 helical membrane passes run 26 to 46, 66 to 86, 89 to 109, 129 to 149, 161 to 181, and 186 to 206; these read FAPYQLWPIAILSPAILLILL, FATGVSWVYVSISGFGGMPLI, LFLMGMLIAYLAVYSGLFAWL, LWLITDWLRGWVMTGFPWLWL, FAPIGGVELLTLFVLISAGAL, and IHKQWLMIIIPVVLMSAGFGI. The region spanning 225-471 is the CN hydrolase domain; the sequence is IQGNVDQNLK…TAVLRAELTP (247 aa). Glutamate 264 (proton acceptor) is an active-site residue. The active site involves lysine 330. Catalysis depends on cysteine 382, which acts as the Nucleophile. The helical transmembrane segment at 481 to 501 threads the bilayer; sequence FGTWPLYFWVALSLMLAWWLP.

Belongs to the CN hydrolase family. Apolipoprotein N-acyltransferase subfamily.

It is found in the cell inner membrane. The catalysed reaction is N-terminal S-1,2-diacyl-sn-glyceryl-L-cysteinyl-[lipoprotein] + a glycerophospholipid = N-acyl-S-1,2-diacyl-sn-glyceryl-L-cysteinyl-[lipoprotein] + a 2-acyl-sn-glycero-3-phospholipid + H(+). The protein operates within protein modification; lipoprotein biosynthesis (N-acyl transfer). Functionally, catalyzes the phospholipid dependent N-acylation of the N-terminal cysteine of apolipoprotein, the last step in lipoprotein maturation. This chain is Apolipoprotein N-acyltransferase, found in Vibrio parahaemolyticus serotype O3:K6 (strain RIMD 2210633).